A 466-amino-acid chain; its full sequence is Adenosylhomocysteinase (466 aa).

Residues Thr57, Asp132, and Glu192 each contribute to the substrate site. 193–195 (TTT) is a binding site for NAD(+). Residues Lys222 and Asp226 each coordinate substrate. Residues Asn227, 256-261 (GYGDVG), Glu279, Asn314, 335-337 (IGH), and Asn380 each bind NAD(+).

Belongs to the adenosylhomocysteinase family. It depends on NAD(+) as a cofactor.

The protein localises to the cytoplasm. It catalyses the reaction S-adenosyl-L-homocysteine + H2O = L-homocysteine + adenosine. The protein operates within amino-acid biosynthesis; L-homocysteine biosynthesis; L-homocysteine from S-adenosyl-L-homocysteine: step 1/1. Its function is as follows. May play a key role in the regulation of the intracellular concentration of adenosylhomocysteine. This chain is Adenosylhomocysteinase, found in Rhizobium meliloti (strain 1021) (Ensifer meliloti).